Consider the following 32-residue polypeptide: Potassium channel toxin alpha-KTx 10.2 (32 aa).

3 disulfide bridges follow: Cys-3-Cys-22, Cys-8-Cys-12, and Cys-27-Cys-29. The residue at position 32 (Tyr-32) is a Tyrosine amide.

It belongs to the short scorpion toxin superfamily. Potassium channel inhibitor family. Alpha-KTx 10 subfamily. In terms of tissue distribution, expressed by the venom gland.

It localises to the secreted. Its function is as follows. Blocks Shaker B potassium-channels (Kv1.1/KCNA1 sub-family). The sequence is that of Potassium channel toxin alpha-KTx 10.2 from Centruroides noxius (Mexican scorpion).